The following is a 187-amino-acid chain: Flavin-dependent monooxygenase, reductase subunit HsaB (187 aa).

FAD contacts are provided by residues 32-36 (PVGFA), 38-39 (QS), 53-55 (CPT), 59-60 (RS), and 85-86 (RF). 152-155 (FYRG) lines the NAD(+) pocket.

It belongs to the non-flavoprotein flavin reductase family. In terms of assembly, hsaAB monooxygenase consists of an oxygenase component HsaA and a reductase component HsaB.

It catalyses the reaction a reduced flavin + NAD(+) = an oxidized flavin + NADH + 2 H(+). It participates in lipid metabolism; steroid biosynthesis. Functionally, catalyzes the reduction of free flavins (FMN or FAD) by NADH. Subsequently, the reduced flavins diffuse to the HsaA oxygenase subunit. This Mycobacterium tuberculosis (strain CDC 1551 / Oshkosh) protein is Flavin-dependent monooxygenase, reductase subunit HsaB (hsaB).